Consider the following 265-residue polypeptide: 4-hydroxy-tetrahydrodipicolinate reductase (265 aa).

Residues 7–12 (GASGRM) and aspartate 33 contribute to the NAD(+) site. Arginine 34 contributes to the NADP(+) binding site. Residues 96-98 (GTT) and 120-123 (AANM) contribute to the NAD(+) site. The active-site Proton donor/acceptor is histidine 153. Residue histidine 154 coordinates (S)-2,3,4,5-tetrahydrodipicolinate. Lysine 157 functions as the Proton donor in the catalytic mechanism. Position 163–164 (163–164 (GT)) interacts with (S)-2,3,4,5-tetrahydrodipicolinate.

Belongs to the DapB family.

The protein resides in the cytoplasm. The enzyme catalyses (S)-2,3,4,5-tetrahydrodipicolinate + NAD(+) + H2O = (2S,4S)-4-hydroxy-2,3,4,5-tetrahydrodipicolinate + NADH + H(+). The catalysed reaction is (S)-2,3,4,5-tetrahydrodipicolinate + NADP(+) + H2O = (2S,4S)-4-hydroxy-2,3,4,5-tetrahydrodipicolinate + NADPH + H(+). It participates in amino-acid biosynthesis; L-lysine biosynthesis via DAP pathway; (S)-tetrahydrodipicolinate from L-aspartate: step 4/4. Catalyzes the conversion of 4-hydroxy-tetrahydrodipicolinate (HTPA) to tetrahydrodipicolinate. This chain is 4-hydroxy-tetrahydrodipicolinate reductase, found in Burkholderia ambifaria (strain MC40-6).